The sequence spans 196 residues: MAKSKYYVVWNGRKPGIYTSWSACEAQVKGYTGAKFKSYPSKEEAEAAFRGEEATPKLAKEEIIWESLSVDVGSQGNPGIVEYKGVDTKTGEVLFEREPIPIGTNNMGEFLAIVHGLRYLKERNSRKPIYSDSQTAIKWVKDKKAKSTLVRNEETALIWKLVDEAEEWLNTHTYETPILKWQTDKWGEIKADYGRK.

The region spanning 58 to 196 (LAKEEIIWES…GEIKADYGRK (139 aa)) is the RNase H type-1 domain. Mg(2+) contacts are provided by Asp-71, Glu-109, Asp-132, and Asp-192.

This sequence belongs to the RNase H family. Requires Mn(2+) as cofactor. Mg(2+) is required as a cofactor.

The protein resides in the cytoplasm. It carries out the reaction Endonucleolytic cleavage to 5'-phosphomonoester.. Its function is as follows. Endonuclease that specifically degrades the RNA of RNA-DNA hybrids. This is Ribonuclease H (rnhA) from Halalkalibacterium halodurans (strain ATCC BAA-125 / DSM 18197 / FERM 7344 / JCM 9153 / C-125) (Bacillus halodurans).